A 117-amino-acid chain; its full sequence is UPF0342 protein BLi01058/BL02870 (117 aa).

The protein belongs to the UPF0342 family.

This chain is UPF0342 protein BLi01058/BL02870, found in Bacillus licheniformis (strain ATCC 14580 / DSM 13 / JCM 2505 / CCUG 7422 / NBRC 12200 / NCIMB 9375 / NCTC 10341 / NRRL NRS-1264 / Gibson 46).